We begin with the raw amino-acid sequence, 504 residues long: Maturase K (504 aa).

The protein belongs to the intron maturase 2 family. MatK subfamily.

Its subcellular location is the plastid. The protein resides in the chloroplast. Functionally, usually encoded in the trnK tRNA gene intron. Probably assists in splicing its own and other chloroplast group II introns. This is Maturase K from Prionotes cerinthoides (Climbing heath).